The chain runs to 167 residues: Ribonuclease P protein subunit p20 (167 aa).

Residues 1 to 36 are disordered; it reads MMGSNYPEHGTKPRSAKYHKQQNHRVVRKQPPRPAV. Residues 12–31 are compositionally biased toward basic residues; sequence KPRSAKYHKQQNHRVVRKQP.

In terms of assembly, interacts with Smn.

The protein localises to the nucleus. It localises to the nucleolus. Its subcellular location is the cytoplasm. The protein resides in the cytoplasmic granule. Functionally, component of ribonuclease P, a protein complex that generates mature tRNA molecules by cleaving their 5'-ends. Also a component of RNase MRP complex, which cleaves pre-rRNA sequences. In Drosophila melanogaster (Fruit fly), this protein is Ribonuclease P protein subunit p20.